The sequence spans 102 residues: Acid shock protein (102 aa).

The first 21 residues, 1–21 (MKKVLALVVAAAMGLSSAAFA), serve as a signal peptide directing secretion. A compositionally biased stretch (low complexity) spans 22–41 (AETATTPAPTATTTKAAPAK). The propeptide occupies 22 to 58 (AETATTPAPTATTTKAAPAKTTHHKKQHKAAPAQKAQ). The tract at residues 22 to 102 (AETATTPAPT…PAKPAAQPAA (81 aa)) is disordered. Over residues 80-90 (AAKKHARKHSH) the composition is skewed to basic residues. The span at 91-102 (QQPAKPAAQPAA) shows a compositional bias: low complexity.

This sequence belongs to the Asr family. Post-translationally, proteolytic processing gives rise to the active protein.

Its subcellular location is the periplasm. Functionally, required for growth and/or survival at acidic conditions. This is Acid shock protein from Escherichia coli O127:H6 (strain E2348/69 / EPEC).